A 335-amino-acid chain; its full sequence is Acetyl-coenzyme A carboxylase carboxyl transferase subunit alpha (335 aa).

A CoA carboxyltransferase C-terminal domain is found at 38-292 (TLEQKAEELR…ATALSEEIEN (255 aa)).

It belongs to the AccA family. Acetyl-CoA carboxylase is a heterohexamer composed of biotin carboxyl carrier protein (AccB), biotin carboxylase (AccC) and two subunits each of ACCase subunit alpha (AccA) and ACCase subunit beta (AccD).

The protein localises to the cytoplasm. The catalysed reaction is N(6)-carboxybiotinyl-L-lysyl-[protein] + acetyl-CoA = N(6)-biotinyl-L-lysyl-[protein] + malonyl-CoA. It participates in lipid metabolism; malonyl-CoA biosynthesis; malonyl-CoA from acetyl-CoA: step 1/1. Component of the acetyl coenzyme A carboxylase (ACC) complex. First, biotin carboxylase catalyzes the carboxylation of biotin on its carrier protein (BCCP) and then the CO(2) group is transferred by the carboxyltransferase to acetyl-CoA to form malonyl-CoA. The polypeptide is Acetyl-coenzyme A carboxylase carboxyl transferase subunit alpha (Heliobacterium modesticaldum (strain ATCC 51547 / Ice1)).